Consider the following 438-residue polypeptide: Adenylosuccinate synthetase (438 aa).

GTP contacts are provided by residues 13–19 and 41–43; these read GDEGKGK and GHT. The active-site Proton acceptor is Asp14. Residues Asp14 and Gly41 each contribute to the Mg(2+) site. Residues 14 to 17, 39 to 42, Thr130, Arg144, Gln225, Thr240, and Arg310 contribute to the IMP site; these read DEGK and NAGH. Catalysis depends on His42, which acts as the Proton donor. Substrate is bound at residue 306 to 312; the sequence is ATTGRLR. Residues Arg312, 338 to 340, and 421 to 423 each bind GTP; these read KLD and STG.

Belongs to the adenylosuccinate synthetase family. Homodimer. Mg(2+) is required as a cofactor.

Its subcellular location is the cytoplasm. It carries out the reaction IMP + L-aspartate + GTP = N(6)-(1,2-dicarboxyethyl)-AMP + GDP + phosphate + 2 H(+). It participates in purine metabolism; AMP biosynthesis via de novo pathway; AMP from IMP: step 1/2. Plays an important role in the de novo pathway of purine nucleotide biosynthesis. Catalyzes the first committed step in the biosynthesis of AMP from IMP. The polypeptide is Adenylosuccinate synthetase (Aliivibrio fischeri (strain ATCC 700601 / ES114) (Vibrio fischeri)).